Reading from the N-terminus, the 432-residue chain is MVSCLCFRPSRKTKLKDKSHKRSIRNQTSSSSAQPAGTAKEVDSSSSQTVVQDSSRYRCQIFSYRELAIATNSFRNESLIGRGGFGTVYKGRLSTGQNIAVKMLDQSGIQGDKEFLVEVLMLSLLHHRNLVHLFGYCAEGDQRLVVYEYMPLGSVEDHLYDLSEGQEALDWKTRMKIALGAAKGLAFLHNEAQPPVIYRDLKTSNILLDHDYKPKLSDFGLAKFGPSDDMSHVSTRVMGTHGYCAPEYANTGKLTLKSDIYSFGVVLLELISGRKALMPSSECVGNQSRYLVHWARPLFLNGRIRQIVDPRLARKGGFSNILLYRGIEVAFLCLAEEANARPSISQVVECLKYIIDHTIRKERRTRRRLLGGNKDGAGTSRSPDETMMRMLEEEEEYVTSEEAIERRRVIVDDARTWAGMNRRGATPPTPTP.

Residues C4 and C6 are each lipidated (S-palmitoyl cysteine). Residues 15–24 show a composition bias toward basic residues; that stretch reads LKDKSHKRSI. The tract at residues 15–47 is disordered; sequence LKDKSHKRSIRNQTSSSSAQPAGTAKEVDSSSS. The segment covering 25–35 has biased composition (polar residues); that stretch reads RNQTSSSSAQP. S44 and S47 each carry phosphoserine. Residues 74-354 form the Protein kinase domain; the sequence is FRNESLIGRG…SQVVECLKYI (281 aa). Residues 80 to 88 and K102 each bind ATP; that span reads IGRGGFGTV. Y147 carries the post-translational modification Phosphotyrosine. D200 serves as the catalytic Proton acceptor. S204 and S234 each carry phosphoserine. Residues T235 and T240 each carry the phosphothreonine modification. Residue Y248 is modified to Phosphotyrosine.

The protein belongs to the protein kinase superfamily. Ser/Thr protein kinase family. Interacts with BSU1, BSL1 and BRI1. In terms of processing, phosphorylated at Ser-44, Ser-47 and Ser-234 by BRI1. Expressed at high levels in the stamen and pollen grains. Expressed at a very low level in vegetative tissues.

The protein localises to the cell membrane. The enzyme catalyses L-seryl-[protein] + ATP = O-phospho-L-seryl-[protein] + ADP + H(+). The catalysed reaction is L-threonyl-[protein] + ATP = O-phospho-L-threonyl-[protein] + ADP + H(+). Its activity is regulated as follows. Activated by phosphorylation at Ser-234. Serine/threonine-protein kinase involved in the positive regulation of brassinosteroid (BR) signaling and plant growth. Mediates BR signal transduction from BRI1 receptor kinase to BSU1 phosphatase. After activation by phosphorylation at Ser-234 by BRI1, CDG1 phosphorylates BSU1 at 'Ser-764' in the phosphatase domain, increasing the ability of BSU1 to inactivate the negative regulator of BR signaling ASK7/BIN2 by dephosphorylation at 'Tyr-200'. The full kinase activity of CDG1 is required for its biological function. This Arabidopsis thaliana (Mouse-ear cress) protein is Serine/threonine-protein kinase CDG1.